The sequence spans 3218 residues: Serine/threonine-protein kinase Smg1 (3218 aa).

A disordered region spans residues 32–78 (LNNNGNHGDSSNEGGGGNGSGRGGATGSGNIAGLGGSESMWSPGGGK). Positions 33–43 (NNNGNHGDSSN) are enriched in low complexity. Residues 44 to 67 (EGGGGNGSGRGGATGSGNIAGLGG) are compositionally biased toward gly residues. Ser70 bears the Phosphoserine mark. Positions 1289 to 1692 (DAAAAAREEG…IFPAVVGANR (404 aa)) constitute an FAT domain. An HEAT repeat occupies 1643-1678 (APWKVIIPQLFSRLNHHEPYVRKSVCDLLCRLAKSR). The 336-residue stretch at 1897–2232 (VESSVCVLPT…LGVGDLKYHK (336 aa)) folds into the PI3K/PI4K catalytic domain. Residues 1903–1909 (VLPTKTK) are G-loop. Positions 2101-2109 (GLGDRHLDN) are catalytic loop. The activation loop stretch occupies residues 2121–2145 (HIDYNVCFEKGRTLRIPEKVPFRLT). Residues 3186–3218 (QRSTVAEQVDYVIREACNPENLAVLYEGWTPWV) enclose the FATC domain.

It belongs to the PI3/PI4-kinase family. As to quaternary structure, component of a post-splicing multiprotein NMD complex. The cofactor is Mn(2+).

The protein localises to the cytoplasm. It catalyses the reaction L-seryl-[protein] + ATP = O-phospho-L-seryl-[protein] + ADP + H(+). The catalysed reaction is L-threonyl-[protein] + ATP = O-phospho-L-threonyl-[protein] + ADP + H(+). Serine/threonine protein kinase involved in mRNA surveillance. Recognizes the substrate consensus sequence [ST]-Q. Involved in nonsense-mediated decay (NMD) of mRNAs containing premature stop codons, probably by phosphorylating Upf1. This Drosophila melanogaster (Fruit fly) protein is Serine/threonine-protein kinase Smg1 (nonC).